The chain runs to 817 residues: Leucine--tRNA ligase (817 aa).

The short motif at 42-52 (PYPSGKLHMGH) is the 'HIGH' region element. A 'KMSKS' region motif is present at residues 576–580 (KMSKS). Residue lysine 579 participates in ATP binding.

Belongs to the class-I aminoacyl-tRNA synthetase family.

It localises to the cytoplasm. The enzyme catalyses tRNA(Leu) + L-leucine + ATP = L-leucyl-tRNA(Leu) + AMP + diphosphate. This is Leucine--tRNA ligase from Methylobacillus flagellatus (strain ATCC 51484 / DSM 6875 / VKM B-1610 / KT).